We begin with the raw amino-acid sequence, 1489 residues long: DNA-directed RNA polymerase subunit beta (1489 aa).

Belongs to the RNA polymerase beta chain family. As to quaternary structure, the RNAP catalytic core consists of 2 alpha, 1 beta, 1 beta' and 1 omega subunit. When a sigma factor is associated with the core the holoenzyme is formed, which can initiate transcription.

It carries out the reaction RNA(n) + a ribonucleoside 5'-triphosphate = RNA(n+1) + diphosphate. In terms of biological role, DNA-dependent RNA polymerase catalyzes the transcription of DNA into RNA using the four ribonucleoside triphosphates as substrates. This Koribacter versatilis (strain Ellin345) protein is DNA-directed RNA polymerase subunit beta.